The sequence spans 65 residues: Large ribosomal subunit protein bL28 (65 aa).

Belongs to the bacterial ribosomal protein bL28 family.

The sequence is that of Large ribosomal subunit protein bL28 from Pseudothermotoga lettingae (strain ATCC BAA-301 / DSM 14385 / NBRC 107922 / TMO) (Thermotoga lettingae).